The sequence spans 498 residues: Archaemetzincin-1 (498 aa).

H261 serves as a coordination point for Zn(2+). E262 functions as the Proton acceptor in the catalytic mechanism. Positions 265, 272, 277, 296, and 299 each coordinate Zn(2+). A disordered region spans residues 332-381 (QEAGEPSVWEDTPPASADSGMCCESDSEPGTSVSEPLTPDAGSHTFASGP).

Belongs to the peptidase M54 family. Zn(2+) serves as cofactor.

Probable zinc metalloprotease. The sequence is that of Archaemetzincin-1 (AMZ1) from Homo sapiens (Human).